A 110-amino-acid chain; its full sequence is UPF0060 membrane protein Mfla_2554 (110 aa).

Transmembrane regions (helical) follow at residues 7 to 27 (VALFVITALAEIIGCYLPYLW), 33 to 53 (SPLLLIPAAISLALFAWLLTL), 61 to 81 (VYAAYGGVYIFVAIFWLWVVD), and 83 to 103 (IIPSNWDFLGASVALLGMAII).

Belongs to the UPF0060 family.

The protein resides in the cell inner membrane. The chain is UPF0060 membrane protein Mfla_2554 from Methylobacillus flagellatus (strain ATCC 51484 / DSM 6875 / VKM B-1610 / KT).